A 783-amino-acid polypeptide reads, in one-letter code: Tricorn protease-interacting factor F2 (783 aa).

Substrate is bound by residues E107 and 236–240 (GAMEN). H271 contributes to the Zn(2+) binding site. Catalysis depends on E272, which acts as the Proton acceptor. Zn(2+) contacts are provided by H275 and E294.

The protein belongs to the peptidase M1 family. In terms of assembly, monomer. Part of the Tricorn proteolytic complex. It depends on Zn(2+) as a cofactor.

The protein resides in the cytoplasm. In terms of biological role, proteases F1, F2 and F3 degrade oligopeptides produced by Tricorn (themselves probably produced by the proteasome), yielding free amino acids. This chain is Tricorn protease-interacting factor F2 (trf2), found in Thermoplasma acidophilum (strain ATCC 25905 / DSM 1728 / JCM 9062 / NBRC 15155 / AMRC-C165).